The primary structure comprises 381 residues: Pre-mRNA-splicing factor cwf28 (381 aa).

The segment at Met-1–Leu-21 is disordered. Phosphoserine is present on residues Ser-11 and Ser-13. A coiled-coil region spans residues Ala-104 to Asn-157. Positions Leu-262 to Leu-381 are disordered. The span at Lys-274 to Ser-285 shows a compositional bias: polar residues. Ser-275 and Ser-277 each carry phosphoserine. 3 stretches are compositionally biased toward basic and acidic residues: residues Leu-287 to Leu-297, Lys-306 to Ser-332, and Ser-362 to Tyr-375.

It belongs to the SPP2 family. Belongs to the 40S cdc5-associated complex (or cwf complex), a spliceosome sub-complex reminiscent of a late-stage spliceosome composed of the U2, U5 and U6 snRNAs and at least brr2, cdc5, cwf2/prp3, cwf3/syf1, cwf4/syf3, cwf5/ecm2, spp42/cwf6, cwf7/spf27, cwf8, cwf9, cwf10, cwf11, cwf12, prp45/cwf13, cwf14, cwf15, cwf16, cwf17, cwf18, cwf19, cwf20, cwf21, cwf22, cwf23, cwf24, cwf25, cwf26, cyp7/cwf27, cwf28, cwf29/ist3, lea1, msl1, prp5/cwf1, prp10, prp12/sap130, prp17, prp22, sap61, sap62, sap114, sap145, slu7, smb1, smd1, smd3, smf1, smg1 and syf2.

The protein resides in the nucleus. Its function is as follows. Involved in spliceosome maturation and the first step of pre-mRNA splicing. The protein is Pre-mRNA-splicing factor cwf28 (cwf28) of Schizosaccharomyces pombe (strain 972 / ATCC 24843) (Fission yeast).